Here is a 218-residue protein sequence, read N- to C-terminus: 3,4-dihydroxy-2-butanone 4-phosphate synthase (218 aa).

Residues 38–39 (RE), aspartate 43, 151–155 (RRGHT), and glutamate 175 each bind D-ribulose 5-phosphate. Glutamate 39 is a Mg(2+) binding site. Positions 125–151 (PHAKPEDLARPGHVFPLRARPGGVMTR) are disordered. Histidine 154 lines the Mg(2+) pocket.

This sequence belongs to the DHBP synthase family. As to quaternary structure, homodimer. Mg(2+) serves as cofactor. The cofactor is Mn(2+).

It carries out the reaction D-ribulose 5-phosphate = (2S)-2-hydroxy-3-oxobutyl phosphate + formate + H(+). The protein operates within cofactor biosynthesis; riboflavin biosynthesis; 2-hydroxy-3-oxobutyl phosphate from D-ribulose 5-phosphate: step 1/1. Its function is as follows. Catalyzes the conversion of D-ribulose 5-phosphate to formate and 3,4-dihydroxy-2-butanone 4-phosphate. This is 3,4-dihydroxy-2-butanone 4-phosphate synthase from Vibrio parahaemolyticus serotype O3:K6 (strain RIMD 2210633).